We begin with the raw amino-acid sequence, 348 residues long: Protein RecA (348 aa).

67–74 is a binding site for ATP; sequence GPESSGKT.

This sequence belongs to the RecA family.

Its subcellular location is the cytoplasm. In terms of biological role, can catalyze the hydrolysis of ATP in the presence of single-stranded DNA, the ATP-dependent uptake of single-stranded DNA by duplex DNA, and the ATP-dependent hybridization of homologous single-stranded DNAs. It interacts with LexA causing its activation and leading to its autocatalytic cleavage. The chain is Protein RecA from Clostridioides difficile (strain 630) (Peptoclostridium difficile).